Reading from the N-terminus, the 157-residue chain is 6,7-dimethyl-8-ribityllumazine synthase (157 aa).

5-amino-6-(D-ribitylamino)uracil is bound by residues Phe22, 56–58 (AFE), and 81–83 (VLI). 86–87 (ET) is a (2S)-2-hydroxy-3-oxobutyl phosphate binding site. His89 serves as the catalytic Proton donor. Position 114 (Phe114) interacts with 5-amino-6-(D-ribitylamino)uracil. Arg128 is a binding site for (2S)-2-hydroxy-3-oxobutyl phosphate.

It belongs to the DMRL synthase family.

The catalysed reaction is (2S)-2-hydroxy-3-oxobutyl phosphate + 5-amino-6-(D-ribitylamino)uracil = 6,7-dimethyl-8-(1-D-ribityl)lumazine + phosphate + 2 H2O + H(+). It functions in the pathway cofactor biosynthesis; riboflavin biosynthesis; riboflavin from 2-hydroxy-3-oxobutyl phosphate and 5-amino-6-(D-ribitylamino)uracil: step 1/2. Its function is as follows. Catalyzes the formation of 6,7-dimethyl-8-ribityllumazine by condensation of 5-amino-6-(D-ribitylamino)uracil with 3,4-dihydroxy-2-butanone 4-phosphate. This is the penultimate step in the biosynthesis of riboflavin. This chain is 6,7-dimethyl-8-ribityllumazine synthase, found in Chlamydia muridarum (strain MoPn / Nigg).